Here is a 206-residue protein sequence, read N- to C-terminus: Thymidylate kinase (206 aa).

10 to 17 (GIDGAGKS) serves as a coordination point for ATP.

The protein belongs to the thymidylate kinase family.

It catalyses the reaction dTMP + ATP = dTDP + ADP. Functionally, phosphorylation of dTMP to form dTDP in both de novo and salvage pathways of dTTP synthesis. This is Thymidylate kinase (tmk) from Neisseria meningitidis serogroup B (strain ATCC BAA-335 / MC58).